The chain runs to 557 residues: CTP synthase (557 aa).

The tract at residues 1–267 (MAKFVFVTGG…CREVLDVLDL (267 aa)) is amidoligase domain. Ser-13 contacts CTP. Ser-13 serves as a coordination point for UTP. Residues 14–19 (SIGKGI) and Asp-71 contribute to the ATP site. 2 residues coordinate Mg(2+): Asp-71 and Glu-141. CTP is bound by residues 148–150 (DIE), 188–193 (KTKPTQ), and Lys-224. UTP is bound by residues 188 to 193 (KTKPTQ) and Lys-224. Residues 292-534 (KVALVGKYVQ…IEAAQQRLPC (243 aa)) enclose the Glutamine amidotransferase type-1 domain. An L-glutamine-binding site is contributed by Gly-354. Cys-381 serves as the catalytic Nucleophile; for glutamine hydrolysis. Residues 382-385 (LGMQ), Glu-405, and Arg-462 contribute to the L-glutamine site. Residues His-507 and Glu-509 contribute to the active site. A disordered region spans residues 532–557 (LPCSPSEAMRQQNNSAAGSSHPSLQP). Residues 540–557 (MRQQNNSAAGSSHPSLQP) show a composition bias toward polar residues.

The protein belongs to the CTP synthase family. In terms of assembly, homotetramer.

The catalysed reaction is UTP + L-glutamine + ATP + H2O = CTP + L-glutamate + ADP + phosphate + 2 H(+). The enzyme catalyses L-glutamine + H2O = L-glutamate + NH4(+). It carries out the reaction UTP + NH4(+) + ATP = CTP + ADP + phosphate + 2 H(+). It functions in the pathway pyrimidine metabolism; CTP biosynthesis via de novo pathway; CTP from UDP: step 2/2. Allosterically activated by GTP, when glutamine is the substrate; GTP has no effect on the reaction when ammonia is the substrate. The allosteric effector GTP functions by stabilizing the protein conformation that binds the tetrahedral intermediate(s) formed during glutamine hydrolysis. Inhibited by the product CTP, via allosteric rather than competitive inhibition. Catalyzes the ATP-dependent amination of UTP to CTP with either L-glutamine or ammonia as the source of nitrogen. Regulates intracellular CTP levels through interactions with the four ribonucleotide triphosphates. This Synechococcus sp. (strain CC9311) protein is CTP synthase.